A 51-amino-acid polypeptide reads, in one-letter code: Large ribosomal subunit protein bL33 (51 aa).

It belongs to the bacterial ribosomal protein bL33 family.

This Alkalilimnicola ehrlichii (strain ATCC BAA-1101 / DSM 17681 / MLHE-1) protein is Large ribosomal subunit protein bL33.